The primary structure comprises 406 residues: Sorting nexin-6 (406 aa).

The residue at position 1 (Met-1) is an N-acetylmethionine. N-acetylmethionine; in Sorting nexin-6, N-terminally processed is present on Met-2. The segment at 2–179 (MEGLDDGPDF…NQDLSVRGKN (178 aa)) is interaction with PIM1. Positions 26 to 173 (LQSDAALQVD…HVFLEYNQDL (148 aa)) constitute a PX domain. A 1,2-diacyl-sn-glycero-3-phospho-(1D-myo-inositol-4,5-bisphosphate) contacts are provided by residues 41 to 47 (SERDRVK), 100 to 106 (FDASREK), and 114 to 117 (EGSM). Phosphoserine occurs at positions 116 and 194. The interval 182 to 199 (EKLEDFFKNMVKSADGVI) is membrane-binding amphipathic helix. Residues 203-406 (VKDVDDFFEH…NCLAVLNGDT (204 aa)) form the BAR domain.

It belongs to the sorting nexin family. As to quaternary structure, forms heterodimers with BAR domain-containing sorting nexins SNX1 and SNX2. The heterodimers are proposed to self-assemble into helical arrays on the membrane to stabilize and expand local membrane curvature underlying endosomal tubule formation. Thought to be a component of the originally described retromer complex (also called SNX-BAR retromer) which is a pentamer containing the heterotrimeric retromer cargo-selective complex (CSC), also described as vacuolar protein sorting subcomplex (VPS), and a heterodimeric membrane-deforming subcomplex formed between SNX1 or SNX2 and SNX5 or SNX6 (also called SNX-BAR subcomplex); the respective CSC and SNX-BAR subcomplexes associate with low affinity. Interacts with SNX1, SNX2, VPS26A, VPS29, VPS35, TGFB receptors, BACE1, BRMS1, PIP5K1C. Interacts with DCTN1; the association with DCTN1 is involved in movement of retromer-c ontaining vesicles toward the TGN. Interacts with PIM1; translocating SNX6 to the nucleus. Interacts with CDKN1B and GIT1. In vitro phosphorylated by PIM1; not affecting PIM1-dependent nuclear translocation.

The protein localises to the early endosome membrane. The protein resides in the cytoplasmic vesicle. It localises to the cytoplasm. Its subcellular location is the nucleus. In terms of biological role, involved in several stages of intracellular trafficking. Interacts with membranes phosphatidylinositol 3,4-bisphosphate and/or phosphatidylinositol 4,5-bisphosphate. Acts in part as component of the retromer membrane-deforming SNX-BAR subcomplex. The SNX-BAR retromer mediates retrograde transport of cargo proteins from endosomes to the trans-Golgi network (TGN) and is involved in endosome-to-plasma membrane transport for cargo protein recycling. The SNX-BAR subcomplex functions to deform the donor membrane into a tubular profile called endosome-to-TGN transport carrier (ETC). Does not have in vitro vesicle-to-membrane remodeling activity. Involved in retrograde endosome-to-TGN transport of lysosomal enzyme receptor IGF2R. May function as link between transport vesicles and dynactin. Negatively regulates retrograde transport of BACE1 from the cell surface to the trans-Golgi network. Involved in E-cadherin sorting and degradation; inhibits PIP5K1C-mediated E-cadherin degradation. In association with GIT1 involved in EGFR degradation. Promotes lysosomal degradation of CDKN1B. May contribute to transcription regulation. The sequence is that of Sorting nexin-6 (Snx6) from Mus musculus (Mouse).